The following is a 445-amino-acid chain: MRLSRYFLPVLKENPSEAQIVSHRYMLRAGMIKQQAAGIYSWLPLGFKVLKRIEQIVHEEQIRAGHIPLLMPTLQPADLWRESGRYDDYGEEMLRITDRHKRDMLYGPTNEEMITDIFRSHVSSYKDLPLTLYHIQWKFRDEIRPRFGVMRGREFLMKDGYNFDLDYESAIHAYNRHMVSYLRTYERMGLQAIPMRAASGPIGGDNTHEFLVLASTGESEVFYDAAITDLKFGDRVVNYDDRAECEAIVKEWTAPYARTDETHDEAVFGQIPEERRRSSRGIEVGQIFYFGTKYSEPMGATVVTADGSRVPVHMGSHGIGVSRLLGAIIEASHDDKGIIWPEGVTPFHAGIVNLKQGDSSTDLACEALYRDLSARGLEPLYDDRDERAGAKFATMDLIGLPWRITVGPRGISAGKVELTNRRTGESEEMSSGAAVDRLAQIYAGI.

Belongs to the class-II aminoacyl-tRNA synthetase family. ProS type 2 subfamily. Homodimer.

It is found in the cytoplasm. The catalysed reaction is tRNA(Pro) + L-proline + ATP = L-prolyl-tRNA(Pro) + AMP + diphosphate. In terms of biological role, catalyzes the attachment of proline to tRNA(Pro) in a two-step reaction: proline is first activated by ATP to form Pro-AMP and then transferred to the acceptor end of tRNA(Pro). This chain is Proline--tRNA ligase, found in Cereibacter sphaeroides (strain ATCC 17029 / ATH 2.4.9) (Rhodobacter sphaeroides).